An 858-amino-acid polypeptide reads, in one-letter code: Potassium channel KOR1 (858 aa).

Positions 1–41 (MGRGIGSKRRVEDDDGENMPGRKKKEEEEEEEDDDGEEEYE) are disordered. The Cytoplasmic portion of the chain corresponds to 1 to 102 (MGRGIGSKRR…PDNKWYRLWT (102 aa)). The segment covering 27 to 41 (EEEEEEDDDGEEEYE) has biased composition (acidic residues). Residues 103 to 123 (RFILVWAVYSSFFTPLEFGFF) form a helical membrane-spanning segment. Over 124-130 (RGLPRNL) the chain is Extracellular. Residues 131 to 151 (FFLDIAGQIAFLIDIVLRFFV) form a helical membrane-spanning segment. Residues 152–174 (AYRDPDTYRMVHNPTSIALRYCK) lie on the Cytoplasmic side of the membrane. A helical membrane pass occupies residues 175–195 (SSFIFDLLGCFPWDAIYKACG). The Extracellular segment spans residues 196 to 201 (SKEEVR). Residues 202–222 (YLLWIRLTRAMKVTEFFRSME) form a helical; Voltage-sensor membrane-spanning segment. At 223–236 (KDIRINYLFTRIVK) the chain is on the cytoplasmic side. A helical transmembrane segment spans residues 237–257 (LIVVELYCTHTAACIFYYLAT). Residues 258–292 (TLPESMEGYTWIGSLQLGDYSYSHFREIDLTKRYM) are Extracellular-facing. The pore-forming intramembrane region spans 293–312 (TSLYFAIVTMATVGYGDIHA). Topologically, residues 313-316 (VNVR) are extracellular. A helical transmembrane segment spans residues 317 to 337 (EMIFIMIYVSFDMILGAYLIG). Residues 338 to 858 (NMTALIVKGS…GDDGGTEARQ (521 aa)) are Cytoplasmic-facing. 419–539 (LFKGCSAEFI…RRILSNLSES (121 aa)) provides a ligand contact to a nucleoside 3',5'-cyclic phosphate. ANK repeat units lie at residues 559–592 (KQEA…DPKN), 596–625 (DGRS…DIDL), 629–658 (FGNT…KLSL), 660–689 (NAGS…DPNA), 693–722 (DHRA…SVFA), and 726–756 (WGTT…ELSR). The region spanning 772–858 (RCSVFPHHPW…GDDGGTEARQ (87 aa)) is the KHA domain.

This sequence belongs to the potassium channel family. Plant (TC 1.A.1.4) subfamily.

The protein localises to the membrane. Probable outward-rectifying potassium channel. The polypeptide is Potassium channel KOR1 (Oryza sativa subsp. japonica (Rice)).